The chain runs to 312 residues: Malate dehydrogenase (312 aa).

Residues 7–13 (GAAGGIG) and D34 contribute to the NAD(+) site. Substrate is bound by residues R81 and R87. NAD(+)-binding positions include N94 and 117 to 119 (ITN). Substrate contacts are provided by N119 and R153. The active-site Proton acceptor is the H177. Residue M227 coordinates NAD(+).

This sequence belongs to the LDH/MDH superfamily. MDH type 1 family. Homodimer.

The catalysed reaction is (S)-malate + NAD(+) = oxaloacetate + NADH + H(+). Catalyzes the reversible oxidation of malate to oxaloacetate. This chain is Malate dehydrogenase, found in Pectobacterium carotovorum subsp. carotovorum (strain PC1).